A 322-amino-acid chain; its full sequence is Eukaryotic translation initiation factor 3 subunit I (322 aa).

5 WD repeats span residues 4–43 (GHER…RLGT), 46–85 (GHQG…VIAS), 141–180 (MVES…KVVD), 184–223 (DHTA…CLKT), and 281–322 (GHFG…NIFE).

Belongs to the eIF-3 subunit I family. As to quaternary structure, component of the eukaryotic translation initiation factor 3 (eIF-3) complex. The eIF-3 complex interacts with pix.

It localises to the cytoplasm. Component of the eukaryotic translation initiation factor 3 (eIF-3) complex, which is involved in protein synthesis of a specialized repertoire of mRNAs and, together with other initiation factors, stimulates binding of mRNA and methionyl-tRNAi to the 40S ribosome. The eIF-3 complex specifically targets and initiates translation of a subset of mRNAs involved in cell proliferation. The polypeptide is Eukaryotic translation initiation factor 3 subunit I (Drosophila mojavensis (Fruit fly)).